The chain runs to 298 residues: Homoserine kinase (298 aa).

Position 83 to 93 (83 to 93) interacts with ATP; sequence PISRGLGSSSS.

It belongs to the GHMP kinase family. Homoserine kinase subfamily.

Its subcellular location is the cytoplasm. The catalysed reaction is L-homoserine + ATP = O-phospho-L-homoserine + ADP + H(+). The protein operates within amino-acid biosynthesis; L-threonine biosynthesis; L-threonine from L-aspartate: step 4/5. Functionally, catalyzes the ATP-dependent phosphorylation of L-homoserine to L-homoserine phosphate. The sequence is that of Homoserine kinase from Clostridium botulinum (strain Alaska E43 / Type E3).